Consider the following 280-residue polypeptide: Transmembrane protein 45B (280 aa).

7 helical membrane passes run 7–27 (HALP…KYPL), 49–69 (LIEG…EQFV), 96–116 (MYLF…PLNL), 120–140 (LDRL…YYHV), 150–170 (IHSL…IEVF), 184–204 (LTIL…PLGG), and 216–236 (VMFI…IMAI).

The protein belongs to the TMEM45 family.

It localises to the membrane. The protein is Transmembrane protein 45B (tmem45b) of Xenopus tropicalis (Western clawed frog).